The following is a 293-amino-acid chain: DOMON domain-containing protein FRRS1L (293 aa).

The first 28 residues, 1 to 28 (MARPPRQHPGVWASLLLLLLTGPAACAA), serve as a signal peptide directing secretion. Residues 29-61 (SPADDGAGPGGRGPRGRARGDTGADEAVPRHDS) are disordered. Positions 46–61 (ARGDTGADEAVPRHDS) are enriched in basic and acidic residues. The 116-residue stretch at 119–234 (CDYFLSYRMI…WYYLFAWGPA (116 aa)) folds into the DOMON domain. The helical transmembrane segment at 271–291 (TFSSPFCLLLIVALTFYLLMG) threads the bilayer.

Component of the outer core of AMPAR complex. AMPAR complex consists of an inner core made of 4 pore-forming GluA/GRIA proteins (GRIA1, GRIA2, GRIA3 and GRIA4) and 4 major auxiliary subunits arranged in a twofold symmetry. One of the two pairs of distinct binding sites is occupied either by CNIH2, CNIH3 or CACNG2, CACNG3. The other harbors CACNG2, CACNG3, CACNG4, CACNG8 or GSG1L. This inner core of AMPAR complex is complemented by outer core constituents binding directly to the GluA/GRIA proteins at sites distinct from the interaction sites of the inner core constituents. Outer core constituents include at least PRRT1, PRRT2, CKAMP44/SHISA9, FRRS1L and NRN1. The proteins of the inner and outer core serve as a platform for other, more peripherally associated AMPAR constituents. Alone or in combination, these auxiliary subunits control the gating and pharmacology of the AMPAR complex and profoundly impact their biogenesis and protein processing. Expressed in adult and fetal brain. Very weak expression in medulla, spinal cord and in adult ovary.

The protein localises to the cell membrane. Its subcellular location is the synapse. In terms of biological role, important modulator of glutamate signaling pathway. The polypeptide is DOMON domain-containing protein FRRS1L (FRRS1L) (Homo sapiens (Human)).